The chain runs to 445 residues: Phosphoglucosamine mutase (445 aa).

Catalysis depends on Ser-102, which acts as the Phosphoserine intermediate. Mg(2+) is bound by residues Ser-102, Asp-241, Asp-243, and Asp-245. Ser-102 carries the post-translational modification Phosphoserine.

Belongs to the phosphohexose mutase family. Mg(2+) serves as cofactor. Activated by phosphorylation.

The catalysed reaction is alpha-D-glucosamine 1-phosphate = D-glucosamine 6-phosphate. Functionally, catalyzes the conversion of glucosamine-6-phosphate to glucosamine-1-phosphate. The chain is Phosphoglucosamine mutase from Proteus mirabilis (strain HI4320).